Reading from the N-terminus, the 352-residue chain is Chorismate synthase (352 aa).

R48 is a binding site for NADP(+). FMN is bound by residues 125-127, 238-239, G278, 293-297, and R319; these read RSS, NA, and KPTSS.

Belongs to the chorismate synthase family. Homotetramer. FMNH2 is required as a cofactor.

It carries out the reaction 5-O-(1-carboxyvinyl)-3-phosphoshikimate = chorismate + phosphate. The protein operates within metabolic intermediate biosynthesis; chorismate biosynthesis; chorismate from D-erythrose 4-phosphate and phosphoenolpyruvate: step 7/7. In terms of biological role, catalyzes the anti-1,4-elimination of the C-3 phosphate and the C-6 proR hydrogen from 5-enolpyruvylshikimate-3-phosphate (EPSP) to yield chorismate, which is the branch point compound that serves as the starting substrate for the three terminal pathways of aromatic amino acid biosynthesis. This reaction introduces a second double bond into the aromatic ring system. The chain is Chorismate synthase from Legionella pneumophila (strain Paris).